Here is a 193-residue protein sequence, read N- to C-terminus: MAKKQSILSPIIRITFTFLVLCGLVYPLIVTGIAQAVMKDNADGSLIYNDKNEVIGSTLIGQNFTDPRYFHGRVSSIEYKAEASGSNNYAPSNPDLEKRVEKSIEEWKKQNPSVPVTEVPIDLVTNSGSGLDPDISPKAASVQVERISKLTNIPKETLDQLIKDQTEGAALGLFGETRVNVLKLNLELQKIMK.

Residues 14–34 traverse the membrane as a helical segment; that stretch reads ITFTFLVLCGLVYPLIVTGIA.

This sequence belongs to the KdpC family. In terms of assembly, the system is composed of three essential subunits: KdpA, KdpB and KdpC.

The protein resides in the cell membrane. In terms of biological role, part of the high-affinity ATP-driven potassium transport (or Kdp) system, which catalyzes the hydrolysis of ATP coupled with the electrogenic transport of potassium into the cytoplasm. This subunit acts as a catalytic chaperone that increases the ATP-binding affinity of the ATP-hydrolyzing subunit KdpB by the formation of a transient KdpB/KdpC/ATP ternary complex. The polypeptide is Potassium-transporting ATPase KdpC subunit (Bacillus cereus (strain AH820)).